Here is a 306-residue protein sequence, read N- to C-terminus: Putative dihydroorotate dehydrogenase A (fumarate) (306 aa).

Residues S20 and 44–45 (KG) contribute to the FMN site. Substrate is bound by residues K44 and 68-72 (NSIGL). Positions 98 and 126 each coordinate FMN. N126 is a substrate binding site. C129 acts as the Nucleophile in catalysis. Positions 164 and 190 each coordinate FMN. A substrate-binding site is contributed by 191–192 (NT). FMN-binding positions include G216, 244-245 (GG), and 266-267 (GT).

This sequence belongs to the dihydroorotate dehydrogenase family. Type 1 subfamily. Homodimer. FMN is required as a cofactor.

Its subcellular location is the cytoplasm. The catalysed reaction is (S)-dihydroorotate + fumarate = orotate + succinate. It participates in pyrimidine metabolism; UMP biosynthesis via de novo pathway. Its function is as follows. Catalyzes the conversion of dihydroorotate to orotate with fumarate as the electron acceptor. The protein is Putative dihydroorotate dehydrogenase A (fumarate) (pyrD) of Aquifex aeolicus (strain VF5).